The following is a 334-amino-acid chain: Galactosylgalactosylxylosylprotein 3-beta-glucuronosyltransferase 1 (334 aa).

At 1-6 the chain is on the cytoplasmic side; that stretch reads MPKRRD. The interval 3-5 is essential for transport from endoplasmic reticulum to Golgi apparatus and interaction with SAR1A; it reads KRR. The chain crosses the membrane as a helical; Signal-anchor for type II membrane protein span at residues 7–27; that stretch reads ILAIVLIVLPWTLLITVWHQS. The Lumenal segment spans residues 28-334; sequence TLAPLLAVHK…KGFTDPSVEI (307 aa). A disordered region spans residues 37-56; it reads KDEGSDPRRETPPGADPREY. Residue 91-93 coordinates UDP-alpha-D-glucuronate; it reads PTY. Residues T103 and T108 each carry the phosphothreonine modification. Position 122 (D122) interacts with UDP-alpha-D-glucuronate. N-linked (GlcNAc...) asparagine glycosylation occurs at N140. UDP-alpha-D-glucuronate-binding residues include R165 and R170. N184 carries N-linked (GlcNAc...) asparagine glycosylation. A UDP-alpha-D-glucuronate-binding site is contributed by 195–197; it reads DDD. D197 is a Mn(2+) binding site. The segment at 245–254 is interaction with galactose moiety of substrate glycoprotein; that stretch reads FDPHRPFAID. The active-site Proton donor/acceptor is E284. N303 is a glycosylation site (N-linked (GlcNAc...) asparagine). UDP-alpha-D-glucuronate is bound at residue 311–313; the sequence is HTR.

This sequence belongs to the glycosyltransferase 43 family. Homodimer. Interacts with SAR1A. Requires Mn(2+) as cofactor. In terms of processing, the soluble form derives from the membrane form by proteolytic processing. In terms of tissue distribution, mainly expressed in the brain.

The protein localises to the golgi apparatus membrane. The protein resides in the secreted. It localises to the endoplasmic reticulum membrane. The catalysed reaction is 3-O-(beta-D-galactosyl-(1-&gt;3)-beta-D-galactosyl-(1-&gt;4)-beta-D-xylosyl)-L-seryl-[protein] + UDP-alpha-D-glucuronate = 3-O-(beta-D-GlcA-(1-&gt;3)-beta-D-Gal-(1-&gt;3)-beta-D-Gal-(1-&gt;4)-beta-D-Xyl)-L-seryl-[protein] + UDP + H(+). It participates in protein modification; protein glycosylation. Involved in the biosynthesis of L2/HNK-1 carbohydrate epitope on glycoproteins. Can also play a role in glycosaminoglycan biosynthesis. Substrates include asialo-orosomucoid (ASOR), asialo-fetuin, and asialo-neural cell adhesion molecule. Requires sphingomyelin for activity: stearoyl-sphingomyelin was the most effective, followed by palmitoyl-sphingomyelin and lignoceroyl-sphingomyelin. Activity was demonstrated only for sphingomyelin with a saturated fatty acid and not for that with an unsaturated fatty acid, regardless of the length of the acyl group. The sequence is that of Galactosylgalactosylxylosylprotein 3-beta-glucuronosyltransferase 1 from Homo sapiens (Human).